A 367-amino-acid chain; its full sequence is Glutamate 5-kinase (367 aa).

Residue Lys-9 coordinates ATP. Residues Ser-49, Asp-136, and Asn-148 each coordinate substrate. ATP-binding positions include 168-169 and 210-216; these read TD and TGGMKSK. The 75-residue stretch at 276-350 folds into the PUA domain; sequence SGQIEVDAGA…GMQSQDIQVR (75 aa).

The protein belongs to the glutamate 5-kinase family.

The protein resides in the cytoplasm. It carries out the reaction L-glutamate + ATP = L-glutamyl 5-phosphate + ADP. Its pathway is amino-acid biosynthesis; L-proline biosynthesis; L-glutamate 5-semialdehyde from L-glutamate: step 1/2. Catalyzes the transfer of a phosphate group to glutamate to form L-glutamate 5-phosphate. In Bacillus cereus (strain B4264), this protein is Glutamate 5-kinase.